Here is a 236-residue protein sequence, read N- to C-terminus: Pyridoxal 5'-phosphate synthase subunit PdxT (236 aa).

61 to 63 (GES) provides a ligand contact to L-glutamine. Cysteine 93 serves as the catalytic Nucleophile. L-glutamine contacts are provided by residues arginine 127 and 163-164 (IR). Residues histidine 215 and glutamate 217 each act as charge relay system in the active site.

The protein belongs to the glutaminase PdxT/SNO family. In the presence of PdxS, forms a dodecamer of heterodimers. Only shows activity in the heterodimer.

The catalysed reaction is aldehydo-D-ribose 5-phosphate + D-glyceraldehyde 3-phosphate + L-glutamine = pyridoxal 5'-phosphate + L-glutamate + phosphate + 3 H2O + H(+). It carries out the reaction L-glutamine + H2O = L-glutamate + NH4(+). Its pathway is cofactor biosynthesis; pyridoxal 5'-phosphate biosynthesis. Functionally, catalyzes the hydrolysis of glutamine to glutamate and ammonia as part of the biosynthesis of pyridoxal 5'-phosphate. The resulting ammonia molecule is channeled to the active site of PdxS. The sequence is that of Pyridoxal 5'-phosphate synthase subunit PdxT from Arthrobacter sp. (strain FB24).